Consider the following 555-residue polypeptide: Urocanate hydratase (555 aa).

NAD(+)-binding positions include 52–53 (GG), Gln130, 176–178 (GMG), Glu196, Arg201, 242–243 (NA), 263–267 (QTSAH), 272–273 (YL), and Tyr321. Cys409 is an active-site residue. Gly491 lines the NAD(+) pocket.

This sequence belongs to the urocanase family. It depends on NAD(+) as a cofactor.

It localises to the cytoplasm. The catalysed reaction is 4-imidazolone-5-propanoate = trans-urocanate + H2O. It functions in the pathway amino-acid degradation; L-histidine degradation into L-glutamate; N-formimidoyl-L-glutamate from L-histidine: step 2/3. Functionally, catalyzes the conversion of urocanate to 4-imidazolone-5-propionate. This is Urocanate hydratase from Nocardioides sp. (strain ATCC BAA-499 / JS614).